A 573-amino-acid chain; its full sequence is Proline--tRNA ligase (573 aa).

This sequence belongs to the class-II aminoacyl-tRNA synthetase family. ProS type 1 subfamily. As to quaternary structure, homodimer.

It localises to the cytoplasm. The catalysed reaction is tRNA(Pro) + L-proline + ATP = L-prolyl-tRNA(Pro) + AMP + diphosphate. Functionally, catalyzes the attachment of proline to tRNA(Pro) in a two-step reaction: proline is first activated by ATP to form Pro-AMP and then transferred to the acceptor end of tRNA(Pro). As ProRS can inadvertently accommodate and process non-cognate amino acids such as alanine and cysteine, to avoid such errors it has two additional distinct editing activities against alanine. One activity is designated as 'pretransfer' editing and involves the tRNA(Pro)-independent hydrolysis of activated Ala-AMP. The other activity is designated 'posttransfer' editing and involves deacylation of mischarged Ala-tRNA(Pro). The misacylated Cys-tRNA(Pro) is not edited by ProRS. This Limosilactobacillus fermentum (strain NBRC 3956 / LMG 18251) (Lactobacillus fermentum) protein is Proline--tRNA ligase.